We begin with the raw amino-acid sequence, 271 residues long: 3-methyl-2-oxobutanoate hydroxymethyltransferase (271 aa).

Mg(2+) is bound by residues Asp49 and Asp88. 3-methyl-2-oxobutanoate is bound by residues 49 to 50, Asp88, and Lys118; that span reads DS. Glu120 lines the Mg(2+) pocket. Residue Glu187 is the Proton acceptor of the active site.

It belongs to the PanB family. In terms of assembly, homodecamer; pentamer of dimers. The cofactor is Mg(2+).

The protein localises to the cytoplasm. It carries out the reaction 3-methyl-2-oxobutanoate + (6R)-5,10-methylene-5,6,7,8-tetrahydrofolate + H2O = 2-dehydropantoate + (6S)-5,6,7,8-tetrahydrofolate. It participates in cofactor biosynthesis; (R)-pantothenate biosynthesis; (R)-pantoate from 3-methyl-2-oxobutanoate: step 1/2. Functionally, catalyzes the reversible reaction in which hydroxymethyl group from 5,10-methylenetetrahydrofolate is transferred onto alpha-ketoisovalerate to form ketopantoate. This Bartonella tribocorum (strain CIP 105476 / IBS 506) protein is 3-methyl-2-oxobutanoate hydroxymethyltransferase.